A 533-amino-acid polypeptide reads, in one-letter code: Tyrosine protein-kinase src-1 (533 aa).

Gly2 is lipidated: N-myristoyl glycine. An SH3 domain is found at 71–132 (QERETLVALY…PRNFVAKQQT (62 aa)). The SH2 domain occupies 138-237 (WYAGKIPRNR…GLCCQLTFPA (100 aa)). A Protein kinase domain is found at 262-521 (LHLKRKLGDG…TLYHFFDDYF (260 aa)). ATP contacts are provided by residues 268 to 276 (LGDGNFGEV) and Lys290. Asp381 serves as the catalytic Proton acceptor. Residue Tyr416 is modified to Phosphotyrosine; by autocatalysis. Tyr528 is modified (phosphotyrosine).

The protein belongs to the protein kinase superfamily. Tyr protein kinase family. SRC subfamily. Interacts (via SH2 domain and SH3 domain) with unc-5 (via cytoplasmic domain); the interaction requires kinase activity. Interacts (when activated and phosphorylated at 'Tyr-416') with ina-1 (via cytoplasmic domain) and with ced-2 (via SH2 domain). Mg(2+) serves as cofactor. The cofactor is Mn(2+). Post-translationally, may be phosphorylated on Tyr-528 by csk-1. Expressed in some neurons (ASE, ADF, AVA, AUA, RMDV and BAG) in the head region, anchor cell, vulva, cells around anus, body wall muscle, pharyngeal muscles in procorpus and metacorpus. Expressed in gonadal distal tip cells.

It localises to the cell membrane. Its subcellular location is the cell projection. The protein resides in the phagocytic cup. The catalysed reaction is L-tyrosyl-[protein] + ATP = O-phospho-L-tyrosyl-[protein] + ADP + H(+). With respect to regulation, may be activated by autophosphorylation. May be inhibited by csk-1-mediated phosphorylation. Non-receptor tyrosine-protein kinase which plays a role in endoderm development by controlling spindle orientation in EMS blastomere, probably downstream of receptor mes-1. Also involved in embryonic body morphogenesis, especially in the formation of the pharynx and the intestine. May be dispensable for pharyngeal muscle organization in the adult. Probably phosphorylates netrin receptor unc-5, to regulate distal tip cell (DTC) migration during gonad development and in axon repulsion. Plays a role in the migration of the QR neuroblast, a precursor of the AVM neuron, and in the migration of the axon cone of AVM, ALM, CAN and PVM neurons. May act downstream of migratory protein mig-13 to control AVM neuron migration. Probably downstream of integrin ina-1/pat-3, plays a role in the clearance of apoptotic cells during mid-embryogenesis. Phosphorylates ced-1 at 'Tyr-1019' which promotes ced-1 proteasomal degradation, maintaining appropriate ced-1 levels for apoptotic cell clearance. This Caenorhabditis elegans protein is Tyrosine protein-kinase src-1.